Here is a 7192-residue protein sequence, read N- to C-terminus: Nonribosomal peptide synthetase gloA (7192 aa).

Residues 1–48 are compositionally biased toward polar residues; it reads MTPSRSLENGEKQMNWNESPQTASPKNVLRDSNSNGNYVNGHGTNING. The interval 1 to 52 is disordered; sequence MTPSRSLENGEKQMNWNESPQTASPKNVLRDSNSNGNYVNGHGTNINGDGSD. A Carrier 1 domain is found at 105 to 181; that stretch reads HSTSKFKEEF…GLFATANFRP (77 aa). S142 carries the post-translational modification O-(pantetheine 4'-phosphoryl)serine. The condensation 1 stretch occupies residues 239 to 634; that stretch reads EDVYPCTPLQ…TYTVQCLCNP (396 aa). Positions 675 to 1047 are adenylation 1; it reads QDQVNIQPAK…SLMYLGRCDS (373 aa). The Carrier 2 domain maps to 1190 to 1266; it reads APSTDAEKQV…DLAFVIQRRL (77 aa). S1227 carries the post-translational modification O-(pantetheine 4'-phosphoryl)serine. A condensation 2 region spans residues 1316-1736; it reads EDIYPCTPLQ…MSWLSDYDEE (421 aa). An adenylation 2 region spans residues 1758–2154; sequence QEQTKLRPNA…GRRDTQIKIR (397 aa). The Carrier 3 domain maps to 2288 to 2364; that stretch reads APSTREECLV…ELAELLAKRS (77 aa). Position 2325 is an O-(pantetheine 4'-phosphoryl)serine (S2325). The segment at 2407-2829 is condensation 3; sequence VEDVYPCTPL…LIAPEDQEQI (423 aa). Residues 2849-3245 are adenylation 3; that stretch reads YKQVMARPQA…GRRDDQIKIR (397 aa). One can recognise a Carrier 4 domain in the interval 3378-3455; the sequence is TPSTKMEKVI…DLASVMTEHR (78 aa). At S3415 the chain carries O-(pantetheine 4'-phosphoryl)serine. The interval 3502 to 3891 is condensation 4; it reads EDIYPCTALQ…NGVLDQFVYI (390 aa). The interval 3920 to 4320 is adenylation 4; that stretch reads QEQALARPTA…ARRDMQVKIR (401 aa). Residues 4453–4529 form the Carrier 5 domain; it reads LPSTQVELQL…ELAVILDGRK (77 aa). At S4490 the chain carries O-(pantetheine 4'-phosphoryl)serine. The segment at 4574-4971 is condensation 5; sequence EDIYPCTPLQ…QFEYVVQKFH (398 aa). The interval 5013–5414 is adenylation 5; the sequence is DDHVAARPMA…GRQDLQVKIR (402 aa). The Carrier 6 domain occupies 5551–5627; the sequence is APDTDLGRLI…DLVNTLSNRS (77 aa). An O-(pantetheine 4'-phosphoryl)serine modification is found at S5588. The interval 5674-6071 is condensation 6; the sequence is EDVYPSTPLQ…CVVQRILTQS (398 aa). An adenylation 6 region spans residues 6111-6507; that stretch reads QAQVKKSPAA…GRRDLQVKIR (397 aa). Positions 6645 to 6721 constitute a Carrier 7 domain; that stretch reads NPSTTMERQL…DLAVVLTDRL (77 aa). S6682 is subject to O-(pantetheine 4'-phosphoryl)serine. The condensation 7 stretch occupies residues 6795–7178; that stretch reads NGPCDTRALK…NPLSPVKQVL (384 aa).

This sequence belongs to the NRP synthetase family.

It participates in mycotoxin biosynthesis. Functionally, nonribosomal peptide synthetase; part of the gene cluster that mediates the biosynthesis of pneumocandins, lipohexapeptides of the echinocandin family that prevent fungal cell wall formation by non-competitive inhibition of beta-1,3-glucan synthase. The 10,12-dimethylmyristoyl side chain is synthesized by the reducing polyketide synthase gloL/GLPKS4. The thioesterase gloN/GLHYD exclusively interacts with gloL/GLPKS4 to maintain turnover of the polyketide side chain. The 10R,12S-dimethylmyristic acid is then transferred to the first thiolation domain of the nonribosomal peptide synthetase gloA/GLNRPS4 by the acyl-AMP ligase gloD/GLligase, followed by its acylation to L-ornithine to trigger elongation of the cyclic hexapeptide. L-ornithine, 4R-hydroxyl-L-proline (generated from L-proline by the dioxygenase gloF/GLOXY2), 3S-hydroxyl-L-homotyrosine (generated by gloG/GLHtyB, gloH/GLHtyA, gloI/GLHtyC, gloJ/GLHtyD and hydroxylated at C-3 by the dioxygenase gloM/GLOXY1), 3R-hydroxyl-L-glutamine (generated from L-glutamine probably by the dioxygenase gloE/GLOXY3) and 3S-hydroxyl-L-proline (generated from L-proline by the dioxygenase gloF/GLOXY2 to yield pneumocandin B0), or 3S-hydroxyl-4S-methyl-L-proline (generated from L-leucine by the dioxygenase gloC/GLOXY4 to yield pneumocandin A0) are sequentially added to the growing chain. The last C domain of gloA/GLNRPS4 is proposed to be responsible for cyclization by condensation to form the peptide bond between L-ornithine and 3S-hydroxyl-4S-methyl-L-proline (for pneumocandin A0) or 3S-hydroxyl-L-proline (for pneumocandin B0). Finally, the subsequent C-4 hydroxylation of 3S-hydroxyl-L-homotyrosine and L-ornithine dihydroxylation at C-4 and C-5 are performed by the cytochrome P450 monooxygenases gloP/GLP450-1 and gloO/GLP450-2, respectively. This Glarea lozoyensis (strain ATCC 20868 / MF5171) protein is Nonribosomal peptide synthetase gloA.